Here is a 234-residue protein sequence, read N- to C-terminus: MASIPGLLFSLTKPMDPTIPEAQFNDWYTNKHLVDTVNSGLASLAVRFKNVNPSHQWPYLALYRLQDLAKLYNMEFMSSLPTDSPAGWGVPNSKADIRIEPRGYQLLTTLERENAKTGVPKFVLTVEFRESFMNAEAFVASCQGLQLDDVGKQPGYRRSMLYQAGRSLVTQEGKAGTEFRSAEQQQPSYLVVHEFDQMPTNTFQEQGASGLWEYMAEYGTGLYRTEPVPVKVYN.

The protein operates within mycotoxin biosynthesis. Part of the core atranone cluster (CAC) which products are predicted to catalyze most or all steps of mycotoxin atranone synthesis, starting from geranylgeranyl pyrophosphate (GGPP). The initial cyclization of GGPP to dolabellane is probably performed by the terpene cyclase ATR13. The Baeyer-Villiger oxidation near the end of the atranone synthesis, which converts atranones D and E to atranones F and G is predicted to be catalyzed by the monooxygenase ATR8. Of the CAC's other predicted gene products, the reducing PKS ATR6 might synthesize a polyketide chain. This polyketide is probably transferred onto the atranone backbone by the polyketide transferase ATR5. Other predicted CAC products include 4 oxygenases (ATR2, ATR3, ATR4, and ATR14), 3 short-chain reductases (ATR7, ATR9, and ATR10), and a methyltransferase (ATR12). These may all be involved in the various steps of atranone biosynthesis, although their specific roles must await experimental determination. The protein is Core atranone cluster (CAC) protein 1 of Stachybotrys chlorohalonatus (strain IBT 40285).